Reading from the N-terminus, the 483-residue chain is Glutamyl-tRNA(Gln) amidotransferase subunit A (483 aa).

Catalysis depends on charge relay system residues Lys75 and Ser150. Ser174 (acyl-ester intermediate) is an active-site residue.

The protein belongs to the amidase family. GatA subfamily. As to quaternary structure, heterotrimer of A, B and C subunits.

It catalyses the reaction L-glutamyl-tRNA(Gln) + L-glutamine + ATP + H2O = L-glutaminyl-tRNA(Gln) + L-glutamate + ADP + phosphate + H(+). Functionally, allows the formation of correctly charged Gln-tRNA(Gln) through the transamidation of misacylated Glu-tRNA(Gln) in organisms which lack glutaminyl-tRNA synthetase. The reaction takes place in the presence of glutamine and ATP through an activated gamma-phospho-Glu-tRNA(Gln). This is Glutamyl-tRNA(Gln) amidotransferase subunit A from Legionella pneumophila (strain Corby).